A 555-amino-acid chain; its full sequence is Formate--tetrahydrofolate ligase (555 aa).

Thr-65–Thr-72 serves as a coordination point for ATP.

Belongs to the formate--tetrahydrofolate ligase family.

The enzyme catalyses (6S)-5,6,7,8-tetrahydrofolate + formate + ATP = (6R)-10-formyltetrahydrofolate + ADP + phosphate. The protein operates within one-carbon metabolism; tetrahydrofolate interconversion. The sequence is that of Formate--tetrahydrofolate ligase from Thermoanaerobacter pseudethanolicus (strain ATCC 33223 / 39E) (Clostridium thermohydrosulfuricum).